Reading from the N-terminus, the 169-residue chain is MNVDFIAGINNLGEKIYTCEPFKTSFQNPFIVALIITAVVLVVFFAICNPPVDKKRKTKTAIYVYICIVALLFLHYYVLNHQLNDIYNKSNMDVIVSSIHDKYKGGDEIIPPISPPSVSNELEEDQPKKIAAGSKPADSKPADSKPASSADSKPLVPLQEVIMPSQYNN.

2 consecutive transmembrane segments (helical) span residues 28–48 (NPFI…FAIC) and 60–80 (TAIY…YVLN). N-linked (GlcNAc...) asparagine; by host glycosylation is present at Asn88. The interval 107 to 169 (DEIIPPISPP…EVIMPSQYNN (63 aa)) is disordered. Positions 144–154 (SKPASSADSKP) are enriched in low complexity.

The protein belongs to the asfivirus B169L family.

Its subcellular location is the host membrane. The protein localises to the virion. The polypeptide is Transmembrane protein B169L (Ornithodoros (relapsing fever ticks)).